The chain runs to 325 residues: Elongation factor P--(R)-beta-lysine ligase (325 aa).

76–78 is a substrate binding site; the sequence is SPE. ATP contacts are provided by residues 100–102 and Asn109; that span reads RNE. Tyr118 lines the substrate pocket. 244-245 is a binding site for ATP; sequence EL. Residue Glu251 coordinates substrate. Gly300 is a binding site for ATP.

Belongs to the class-II aminoacyl-tRNA synthetase family. EpmA subfamily. In terms of assembly, homodimer.

The enzyme catalyses D-beta-lysine + L-lysyl-[protein] + ATP = N(6)-((3R)-3,6-diaminohexanoyl)-L-lysyl-[protein] + AMP + diphosphate + H(+). Its function is as follows. With EpmB is involved in the beta-lysylation step of the post-translational modification of translation elongation factor P (EF-P) on 'Lys-34'. Catalyzes the ATP-dependent activation of (R)-beta-lysine produced by EpmB, forming a lysyl-adenylate, from which the beta-lysyl moiety is then transferred to the epsilon-amino group of EF-P 'Lys-34'. This Salmonella agona (strain SL483) protein is Elongation factor P--(R)-beta-lysine ligase.